A 209-amino-acid chain; its full sequence is GTP cyclohydrolase 1 (209 aa).

Zn(2+) is bound by residues cysteine 100, histidine 103, and cysteine 171.

It belongs to the GTP cyclohydrolase I family. In terms of assembly, toroid-shaped homodecamer, composed of two pentamers of five dimers.

The catalysed reaction is GTP + H2O = 7,8-dihydroneopterin 3'-triphosphate + formate + H(+). Its pathway is cofactor biosynthesis; 7,8-dihydroneopterin triphosphate biosynthesis; 7,8-dihydroneopterin triphosphate from GTP: step 1/1. This Ralstonia nicotianae (strain ATCC BAA-1114 / GMI1000) (Ralstonia solanacearum) protein is GTP cyclohydrolase 1.